We begin with the raw amino-acid sequence, 150 residues long: uncharacterized protein (150 aa).

Residues 19 to 39 (SLGMCVILIDGLIVLTAAFVF) traverse the membrane as a helical segment.

It to B.subtilis YpjC, YqfU and YitT.

The protein resides in the cell membrane. This is an uncharacterized protein from Bacillus sp. (strain PS3).